The following is a 524-amino-acid chain: RNA-splicing ligase RtcB homolog 2 (524 aa).

Positions 141, 144, 249, 281, and 372 each coordinate Mn(2+). 248-252 (NHYLE) lines the GMP pocket. Residues 372–373 (HN), 421–424 (GGSM), Ser-428, 447–450 (HGAG), and Lys-523 contribute to the GMP site. His-447 serves as the catalytic GMP-histidine intermediate.

This sequence belongs to the RtcB family. As to quaternary structure, catalytic component of the tRNA-splicing ligase complex. The cofactor is Mn(2+).

It catalyses the reaction a 3'-end 3'-phospho-ribonucleotide-RNA + a 5'-end dephospho-ribonucleoside-RNA + GTP = a ribonucleotidyl-ribonucleotide-RNA + GMP + diphosphate. It carries out the reaction a 3'-end 2',3'-cyclophospho-ribonucleotide-RNA + a 5'-end dephospho-ribonucleoside-RNA + GTP + H2O = a ribonucleotidyl-ribonucleotide-RNA + GMP + diphosphate + H(+). Functionally, catalytic subunit of the tRNA-splicing ligase complex that acts by directly joining spliced tRNA halves to mature-sized tRNAs by incorporating the precursor-derived splice junction phosphate into the mature tRNA as a canonical 3',5'-phosphodiester. May act as an RNA ligase with broad substrate specificity, and may function toward other RNAs. This Entamoeba dispar (strain ATCC PRA-260 / SAW760) protein is RNA-splicing ligase RtcB homolog 2.